The chain runs to 177 residues: Large ribosomal subunit protein uL6 (177 aa).

The protein belongs to the universal ribosomal protein uL6 family. As to quaternary structure, part of the 50S ribosomal subunit.

Its function is as follows. This protein binds to the 23S rRNA, and is important in its secondary structure. It is located near the subunit interface in the base of the L7/L12 stalk, and near the tRNA binding site of the peptidyltransferase center. The protein is Large ribosomal subunit protein uL6 of Thioalkalivibrio sulfidiphilus (strain HL-EbGR7).